The primary structure comprises 176 residues: Large ribosomal subunit protein eL6 (176 aa).

The tract at residues 1 to 27 (MSQVAPKWYQSEDVPAPKQTRKTARPQ) is disordered.

The protein belongs to the eukaryotic ribosomal protein eL6 family. In terms of assembly, component of the large ribosomal subunit. Mature ribosomes consist of a small (40S) and a large (60S) subunit. The 40S subunit contains about 32 different proteins and 1 molecule of RNA (18S). The 60S subunit contains 45 different proteins and 3 molecules of RNA (25S, 5.8S and 5S).

Its subcellular location is the cytoplasm. Its function is as follows. Component of the ribosome, a large ribonucleoprotein complex responsible for the synthesis of proteins in the cell. The small ribosomal subunit (SSU) binds messenger RNAs (mRNAs) and translates the encoded message by selecting cognate aminoacyl-transfer RNA (tRNA) molecules. The large subunit (LSU) contains the ribosomal catalytic site termed the peptidyl transferase center (PTC), which catalyzes the formation of peptide bonds, thereby polymerizing the amino acids delivered by tRNAs into a polypeptide chain. The nascent polypeptides leave the ribosome through a tunnel in the LSU and interact with protein factors that function in enzymatic processing, targeting, and the membrane insertion of nascent chains at the exit of the ribosomal tunnel. This is Large ribosomal subunit protein eL6 from Candida albicans (strain SC5314 / ATCC MYA-2876) (Yeast).